A 443-amino-acid chain; its full sequence is MSSLTNPNIFTVSRLNSEVRLLLENQLGIVWLVGEISNFSAPVSGHWYFTLKDSMAQVKCAMFRGNNRLVSFKPTNGNQVLVKARLSLYEPRGDYQLIIESMQPEGDGRLQQQFDALKMKLASEGLFAQSSKQAIPEHPKCVGIITSKTGAALYDILDVLKRRDPSLPVVIYPTLVQGEEAAIQIAQAIGRANSRNECDVLIVGRGGGSLEDLWCFNNEIVARTIAASQIPIISAVGHEIDVTIADFVADLRAPTPSAAAELVSRDNSHKDQALISREQKLRAAWRHYLTEQNRTIVSLSHRLEKQHPRYRLMRQTQQADELQIRLQRAMEKYLAQREQKVSRVQHKLQLLSPVRQISEQKNALARVEQKMMDAMDRKLLRLRHQIAIAAEKLDTVSPLATLKRGYSITQSESGEVITRQSQIKTGDTLVTRLSDGEIRSTVN.

Belongs to the XseA family. In terms of assembly, heterooligomer composed of large and small subunits.

Its subcellular location is the cytoplasm. The enzyme catalyses Exonucleolytic cleavage in either 5'- to 3'- or 3'- to 5'-direction to yield nucleoside 5'-phosphates.. Bidirectionally degrades single-stranded DNA into large acid-insoluble oligonucleotides, which are then degraded further into small acid-soluble oligonucleotides. This Vibrio vulnificus (strain YJ016) protein is Exodeoxyribonuclease 7 large subunit.